Here is a 400-residue protein sequence, read N- to C-terminus: CCA-adding enzyme (400 aa).

ATP contacts are provided by glycine 28 and arginine 31. Positions 28 and 31 each coordinate CTP. Residues aspartate 41 and aspartate 43 each contribute to the Mg(2+) site. The ATP site is built by arginine 112, aspartate 155, arginine 158, arginine 161, and arginine 164. CTP is bound by residues arginine 112, aspartate 155, arginine 158, arginine 161, and arginine 164.

It belongs to the tRNA nucleotidyltransferase/poly(A) polymerase family. Bacterial CCA-adding enzyme type 3 subfamily. As to quaternary structure, homodimer. The cofactor is Mg(2+).

It carries out the reaction a tRNA precursor + 2 CTP + ATP = a tRNA with a 3' CCA end + 3 diphosphate. It catalyses the reaction a tRNA with a 3' CCA end + 2 CTP + ATP = a tRNA with a 3' CCACCA end + 3 diphosphate. Catalyzes the addition and repair of the essential 3'-terminal CCA sequence in tRNAs without using a nucleic acid template. Adds these three nucleotides in the order of C, C, and A to the tRNA nucleotide-73, using CTP and ATP as substrates and producing inorganic pyrophosphate. tRNA 3'-terminal CCA addition is required both for tRNA processing and repair. Also involved in tRNA surveillance by mediating tandem CCA addition to generate a CCACCA at the 3' terminus of unstable tRNAs. While stable tRNAs receive only 3'-terminal CCA, unstable tRNAs are marked with CCACCA and rapidly degraded. The chain is CCA-adding enzyme from Staphylococcus aureus (strain MRSA252).